The primary structure comprises 719 residues: La-related protein 4 (719 aa).

The residue at position 1 (methionine 1) is an N-acetylmethionine. The tract at residues 12 to 21 (TGLNPNAKVW) is interaction with PABPC1. A disordered region spans residues 21 to 55 (WQEIPSGNPDGTPVTEPSWHETAATSGSHPEGHTE). The interaction with the poly-A tract of mRNA stretch occupies residues 107–299 (SSAISTEDLK…PIQTPTQYPS (193 aa)). Positions 109–198 (AISTEDLKEC…RPSHKRCIVI (90 aa)) constitute an HTH La-type RNA-binding domain. Positions 199–277 (LREIPETTPV…KAINTFFAKN (79 aa)) constitute an RRM domain. Residue arginine 363 is modified to Omega-N-methylarginine. Disordered stretches follow at residues 363–398 (RPFP…LSRS) and 437–470 (GRGR…APTP). Over residues 376–389 (SSSGSEHSTEGSVS) the composition is skewed to low complexity. Serine 387 and serine 396 each carry phosphoserine. The span at 439–448 (GRRTLFRGRR) shows a compositional bias: basic residues. The segment covering 460–470 (PAATEAKAPTP) has biased composition (low complexity). Serine 500 is subject to Phosphoserine. Polar residues-rich tracts occupy residues 529-538 (DCTSAPLSIS) and 578-599 (SSPT…SNIN). Disordered stretches follow at residues 529–562 (DCTS…QMED), 576–601 (PVSS…INPP), and 615–719 (AEVC…RSPK). Phosphoserine is present on residues serine 578, serine 592, and serine 642. Threonine 644 is subject to Phosphothreonine. Residues 654-673 (KPVEKPHEKPETRASKDHSG) show a composition bias toward basic and acidic residues. Arginine 681 carries the omega-N-methylarginine modification. The residue at position 717 (serine 717) is a Phosphoserine.

In terms of assembly, interacts (via N-terminal region) with PABPC1. Interacts with RACK1.

It localises to the cytoplasm. Its subcellular location is the stress granule. It is found in the cytosol. RNA binding protein that binds to the poly-A tract of mRNA molecules. Associates with the 40S ribosomal subunit and with polysomes. Plays a role in the regulation of mRNA translation. Plays a role in the regulation of cell morphology and cytoskeletal organization. This is La-related protein 4 (Larp4) from Mus musculus (Mouse).